The sequence spans 876 residues: SED5-binding protein 2 (876 aa).

Ser-51 carries the phosphoserine modification. Residues 164 to 189 (CRRCRSYMNPFVVFINQGRKWQCNIC) are zinc finger-like. The segment covering 300–324 (VSDEDDEESDGEEEDEDEEEEDVDN) has biased composition (acidic residues). The interval 300–326 (VSDEDDEESDGEEEDEDEEEEDVDNSE) is disordered.

The protein belongs to the SEC23/SEC24 family. SEC24 subfamily. In terms of assembly, COPII is composed of at least five proteins: the SEC23/24 complex, the SEC13/31 complex and SAR1. Interacts with GRH1.

It localises to the cytoplasm. Its subcellular location is the golgi apparatus membrane. The protein resides in the endoplasmic reticulum membrane. Functionally, component of the COPII coat, that covers ER-derived vesicles involved in transport from the endoplasmic reticulum to the Golgi apparatus. COPII acts in the cytoplasm to promote the transport of secretory, plasma membrane, and vacuolar proteins from the endoplasmic reticulum to the Golgi complex. This Saccharomyces cerevisiae (strain ATCC 204508 / S288c) (Baker's yeast) protein is SED5-binding protein 2 (SFB2).